Here is a 102-residue protein sequence, read N- to C-terminus: Large ribosomal subunit protein uL24 (102 aa).

The protein belongs to the universal ribosomal protein uL24 family. As to quaternary structure, part of the 50S ribosomal subunit.

In terms of biological role, one of two assembly initiator proteins, it binds directly to the 5'-end of the 23S rRNA, where it nucleates assembly of the 50S subunit. Its function is as follows. One of the proteins that surrounds the polypeptide exit tunnel on the outside of the subunit. In Polynucleobacter asymbioticus (strain DSM 18221 / CIP 109841 / QLW-P1DMWA-1) (Polynucleobacter necessarius subsp. asymbioticus), this protein is Large ribosomal subunit protein uL24.